We begin with the raw amino-acid sequence, 74 residues long: Conotoxin ArMKLT2-041 (74 aa).

An N-terminal signal peptide occupies residues 1-22; sequence MKLTCVLIVAVLFLTACQLIAA. Residues 23–46 constitute a propeptide that is removed on maturation; it reads DDSRDLQKFPRRKMRDGMLNTKNT. Glutamine 49 carries the pyrrolidone carboxylic acid modification. 3 disulfide bridges follow: cysteine 50-cysteine 65, cysteine 57-cysteine 68, and cysteine 64-cysteine 73.

Belongs to the conotoxin O1 superfamily. In terms of tissue distribution, expressed by the venom duct.

It is found in the secreted. The polypeptide is Conotoxin ArMKLT2-041 (Conus arenatus (Sand-dusted cone)).